We begin with the raw amino-acid sequence, 375 residues long: MDIEERIKLVLKKPTEEVLTVENLRHLFEIGAPLQHYIGFEISGYIHLGTGLMAGAKIADFQKAGIKTRVFLADWHSWINDKLGGDLETIQEVALKYFKVGMEKSIEVMGGKPEKVEFVLASEILEKGDYWQTVIDISKNVTLSRVLRSITIMGRKMGEAIDFAKLIYPMMQVADIFYQGVTIAHAGMDQRKAHVIAIEVAEKLRYHPIIHNGEKLKPVAVHHHLLLGLQEPPKWPIESEEEFKEIKAEMKMSKSKPYSAVFIHDSPEEIREKLRKAFCPAREVKYNPVLDWVEYLVFREEPTEFTIHRPAKYGGDVTYTTFEELKRDFAEGKLHPLDLKNAVAEYLIDLLEPIRKYFERHPEPLELMKSVQITR.

Y37, Y168, Q172, D175, and Q190 together coordinate L-tyrosine. Residues 251-255 (KMSKS) carry the 'KMSKS' region motif. ATP is bound at residue K254.

It belongs to the class-I aminoacyl-tRNA synthetase family. TyrS type 4 subfamily. In terms of assembly, homodimer.

It is found in the cytoplasm. It carries out the reaction tRNA(Tyr) + L-tyrosine + ATP = L-tyrosyl-tRNA(Tyr) + AMP + diphosphate + H(+). Its function is as follows. Catalyzes the attachment of tyrosine to tRNA(Tyr) in a two-step reaction: tyrosine is first activated by ATP to form Tyr-AMP and then transferred to the acceptor end of tRNA(Tyr). This Pyrococcus furiosus (strain ATCC 43587 / DSM 3638 / JCM 8422 / Vc1) protein is Tyrosine--tRNA ligase.